The chain runs to 349 residues: Quinone oxidoreductase-like protein 1 (349 aa).

The protein belongs to the zinc-containing alcohol dehydrogenase family. Quinone oxidoreductase subfamily. Homodimer. Component of the FERRY complex composed of five subunits, TBCK, PPP1R21, FERRY3, CRYZL1 and GATD1 with a ratio of 1:2:1:2:4, respectively. In terms of tissue distribution, ubiquitous.

Its subcellular location is the early endosome. In terms of biological role, component of the FERRY complex (Five-subunit Endosomal Rab5 and RNA/ribosome intermediary). The FERRY complex directly interacts with mRNAs and RAB5A, and functions as a RAB5A effector involved in the localization and the distribution of specific mRNAs most likely by mediating their endosomal transport. The complex recruits mRNAs and ribosomes to early endosomes through direct mRNA-interaction. The polypeptide is Quinone oxidoreductase-like protein 1 (CRYZL1) (Homo sapiens (Human)).